The following is a 93-amino-acid chain: Small ribosomal subunit protein uS19 (93 aa).

It belongs to the universal ribosomal protein uS19 family.

Protein S19 forms a complex with S13 that binds strongly to the 16S ribosomal RNA. The protein is Small ribosomal subunit protein uS19 of Mycobacterium marinum (strain ATCC BAA-535 / M).